Reading from the N-terminus, the 363-residue chain is Zinc finger CCCH domain-containing protein 53 (363 aa).

A C3H1-type zinc finger spans residues 154 to 181 (KNRPKICSFYTIGQCKRGAECSFRHEMP). In terms of domain architecture, RRM spans 225-310 (KTLYVGGLNS…PPNEYSHYPS (86 aa)). The tract at residues 281-348 (LISQQQNQHS…SYSYPMPPHQ (68 aa)) is disordered. The segment covering 283 to 297 (SQQQNQHSQMQQYYM) has biased composition (low complexity). A compositionally biased stretch (polar residues) spans 320–336 (FSTQESDGSSTSENNRA).

This is Zinc finger CCCH domain-containing protein 53 from Arabidopsis thaliana (Mouse-ear cress).